The following is a 314-amino-acid chain: Polyadenylate-binding protein-interacting protein 8 (314 aa).

The tract at residues 1–47 (MAAITEMATDSNDVINDGGTGDGIEKSTDSKPEIESDDLKPKSKPEY) is disordered. Basic and acidic residues predominate over residues 23–47 (GIEKSTDSKPEIESDDLKPKSKPEY). Positions 59 to 69 (KLNPEAKEFFP) match the PAM2-like motif. Positions 99–112 (RRRRNNYNQGRRVR) match the Bipartite nuclear localization signal motif. RRM domains follow at residues 128–203 (RTVY…PSKT) and 225–301 (RTIY…PSKT).

In terms of assembly, interacts with MPC. As to expression, expressed in cauline leaves, stems, rosette leaves, immature siliques and primary inflorescences but at a low level.

Its subcellular location is the nucleus. This chain is Polyadenylate-binding protein-interacting protein 8 (CID8), found in Arabidopsis thaliana (Mouse-ear cress).